A 398-amino-acid polypeptide reads, in one-letter code: Glycosyltransferase GlyF (398 aa).

The tract at residues 1-259 (MRKSIVLAAD…SEIAFQRSDL (259 aa)) is GT8 domain. Residues 8–13 (AADNAY) and 101–102 (DS) contribute to the UDP site. The Mn(2+) site is built by Asp101, Asp103, and His221. A UDP-binding site is contributed by 221-227 (HYASHDK).

The protein in the N-terminal section; belongs to the glycosyltransferase 8 family.

Its function is as follows. May be involved in the polymorphic O-glycosylation of the serine-rich repeat protein PsrP. Has hydrolytic activity against UDP-galactose and to a lesser extent against UDP-glucose; no glycosyltransferase activity has been seen with tested substrates. The protein is Glycosyltransferase GlyF of Streptococcus pneumoniae serotype 4 (strain ATCC BAA-334 / TIGR4).